The sequence spans 212 residues: Leucyl/phenylalanyl-tRNA--protein transferase (212 aa).

Belongs to the L/F-transferase family.

It localises to the cytoplasm. The catalysed reaction is N-terminal L-lysyl-[protein] + L-leucyl-tRNA(Leu) = N-terminal L-leucyl-L-lysyl-[protein] + tRNA(Leu) + H(+). The enzyme catalyses N-terminal L-arginyl-[protein] + L-leucyl-tRNA(Leu) = N-terminal L-leucyl-L-arginyl-[protein] + tRNA(Leu) + H(+). It catalyses the reaction L-phenylalanyl-tRNA(Phe) + an N-terminal L-alpha-aminoacyl-[protein] = an N-terminal L-phenylalanyl-L-alpha-aminoacyl-[protein] + tRNA(Phe). Its function is as follows. Functions in the N-end rule pathway of protein degradation where it conjugates Leu, Phe and, less efficiently, Met from aminoacyl-tRNAs to the N-termini of proteins containing an N-terminal arginine or lysine. This Jannaschia sp. (strain CCS1) protein is Leucyl/phenylalanyl-tRNA--protein transferase.